We begin with the raw amino-acid sequence, 264 residues long: Putative ankyrin repeat domain-containing protein 19 (264 aa).

ANK repeat units follow at residues 67-96 (KDRT…QINI), 100-129 (LNRT…NPNI), 133-162 (YSNT…NIEA), 166-195 (EGNT…NLHA), and 199-228 (FRRT…NIFS).

The sequence is that of Putative ankyrin repeat domain-containing protein 19 (ANKRD19P) from Homo sapiens (Human).